A 533-amino-acid polypeptide reads, in one-letter code: D-3-phosphoglycerate dehydrogenase (533 aa).

N-acetylalanine is present on Ala-2. At Ser-14 the chain carries Phosphoserine. Lys-21 is modified (N6-acetyllysine; alternate). Lys-21 participates in a covalent cross-link: Glycyl lysine isopeptide (Lys-Gly) (interchain with G-Cter in SUMO1); alternate. A Glycyl lysine isopeptide (Lys-Gly) (interchain with G-Cter in SUMO2); alternate cross-link involves residue Lys-21. Lys-58 is modified (N6-acetyllysine). NAD(+) is bound by residues Thr-78, 155-156, Asp-175, Thr-207, 234-236, and Asp-260; these read RI and CAR. Phosphothreonine is present on Thr-78. Residue Arg-236 is part of the active site. Residue Glu-265 is part of the active site. Catalysis depends on His-283, which acts as the Proton donor. Position 283 to 286 (283 to 286) interacts with NAD(+); that stretch reads HLGA.

This sequence belongs to the D-isomer specific 2-hydroxyacid dehydrogenase family. In terms of assembly, homotetramer.

It carries out the reaction (2R)-3-phosphoglycerate + NAD(+) = 3-phosphooxypyruvate + NADH + H(+). It catalyses the reaction (R)-2-hydroxyglutarate + NAD(+) = 2-oxoglutarate + NADH + H(+). The enzyme catalyses (S)-malate + NAD(+) = oxaloacetate + NADH + H(+). It participates in amino-acid biosynthesis; L-serine biosynthesis; L-serine from 3-phospho-D-glycerate: step 1/3. In terms of biological role, catalyzes the reversible oxidation of 3-phospho-D-glycerate to 3-phosphonooxypyruvate, the first step of the phosphorylated L-serine biosynthesis pathway. Also catalyzes the reversible oxidation of 2-hydroxyglutarate to 2-oxoglutarate and the reversible oxidation of (S)-malate to oxaloacetate. This Homo sapiens (Human) protein is D-3-phosphoglycerate dehydrogenase (PHGDH).